The sequence spans 143 residues: Type II secretion system core protein G (143 aa).

Residues methionine 1 to glycine 8 constitute a propeptide, leader sequence. Phenylalanine 9 carries the N-methylphenylalanine modification. The chain crosses the membrane as a helical span at residues phenylalanine 9 to valine 29. The tract at residues glutamine 70–glycine 92 is disordered.

This sequence belongs to the GSP G family. In terms of assembly, type II secretion system is composed of four main components: the outer membrane complex, the inner membrane complex, the cytoplasmic secretion ATPase and the periplasm-spanning pseudopilus. Forms homomultimers. Cleaved by the prepilin peptidase. Post-translationally, methylated by prepilin peptidase at the amino group of the N-terminal phenylalanine once the leader sequence is cleaved.

The protein resides in the cell inner membrane. Core component of the type II secretion system required for the energy-dependent secretion of extracellular factors such as proteases and toxins from the periplasm. Pseudopilin (pilin-like) protein that polymerizes to form the pseudopilus. Further polymerization triggers pseudopilus growth. This Aeromonas hydrophila protein is Type II secretion system core protein G (exeG).